The following is a 1517-amino-acid chain: DNA-directed RNA polymerase subunit beta' (1517 aa).

Zn(2+) is bound by residues Cys71, Cys73, Cys86, and Cys89. Mg(2+) contacts are provided by Asp482, Asp484, and Asp486. The Zn(2+) site is built by Cys812, Cys886, Cys893, and Cys896.

Belongs to the RNA polymerase beta' chain family. The RNAP catalytic core consists of 2 alpha, 1 beta, 1 beta' and 1 omega subunit. When a sigma factor is associated with the core the holoenzyme is formed, which can initiate transcription. Requires Mg(2+) as cofactor. Zn(2+) serves as cofactor.

The catalysed reaction is RNA(n) + a ribonucleoside 5'-triphosphate = RNA(n+1) + diphosphate. Its function is as follows. DNA-dependent RNA polymerase catalyzes the transcription of DNA into RNA using the four ribonucleoside triphosphates as substrates. The chain is DNA-directed RNA polymerase subunit beta' from Campylobacter jejuni (strain RM1221).